A 182-amino-acid chain; its full sequence is Large ribosomal subunit protein uL5 (182 aa).

Belongs to the universal ribosomal protein uL5 family. Part of the 50S ribosomal subunit; part of the 5S rRNA/L5/L18/L25 subcomplex. Contacts the 5S rRNA and the P site tRNA. Forms a bridge to the 30S subunit in the 70S ribosome.

Its function is as follows. This is one of the proteins that bind and probably mediate the attachment of the 5S RNA into the large ribosomal subunit, where it forms part of the central protuberance. In the 70S ribosome it contacts protein S13 of the 30S subunit (bridge B1b), connecting the 2 subunits; this bridge is implicated in subunit movement. Contacts the P site tRNA; the 5S rRNA and some of its associated proteins might help stabilize positioning of ribosome-bound tRNAs. In Acidobacterium capsulatum (strain ATCC 51196 / DSM 11244 / BCRC 80197 / JCM 7670 / NBRC 15755 / NCIMB 13165 / 161), this protein is Large ribosomal subunit protein uL5.